A 701-amino-acid polypeptide reads, in one-letter code: Polyribonucleotide nucleotidyltransferase (701 aa).

Asp487 and Asp493 together coordinate Mg(2+). One can recognise a KH domain in the interval 554-613 (PTMIAMKIDTDKIRDVIGKGGATIRAICEETKASIDIEDDGSIKIFGETKEAADAAKQRI). The 69-residue stretch at 623–691 (GKIYVGKVER…NRGRIKLSIK (69 aa)) folds into the S1 motif domain.

This sequence belongs to the polyribonucleotide nucleotidyltransferase family. In terms of assembly, component of the RNA degradosome, which is a multiprotein complex involved in RNA processing and mRNA degradation. Requires Mg(2+) as cofactor.

It localises to the cytoplasm. The enzyme catalyses RNA(n+1) + phosphate = RNA(n) + a ribonucleoside 5'-diphosphate. Involved in mRNA degradation. Catalyzes the phosphorolysis of single-stranded polyribonucleotides processively in the 3'- to 5'-direction. This chain is Polyribonucleotide nucleotidyltransferase, found in Pseudomonas putida (strain ATCC 47054 / DSM 6125 / CFBP 8728 / NCIMB 11950 / KT2440).